The sequence spans 628 residues: MAVLPLLLCLLPLAPASSPSQPATPSPCPRRCRCQTQSLPLSVLCPGAGLLFVPPSLDRRAAELRLADNFIAAVRRRDLANMTGLLHLSLSRNTIRHVAAGAFADLRALRALHLDGNRLTSLGEGQLRGLVNLRHLILSNNQLAALAAGALDDCAETLEDLDLSYNNLEQLPWEALGRLGNVNTLGLDHNLLASVPAGAFSRLHKLARLDMTSNRLTTIPPDPLFSRLPLLARPRGSPASALVLAFGGNPLHCNCELVWLRRLAREDDLEACASPPALGGRYFWAVGEEEFVCEPPVVTHRSPPLAVPAGRPAALRCRAVGDPEPRVRWVSPQGRLVGNSSRARAFPNGTLELLVTEPGDGGIFTCIAANAAGEATAAVELTVGPPPPPQLANSTSCDPPRDGDPDALTPPSAASASAAAKAADTGPPTDRGVQVTEHGATAALVQWPDQRPIPGIRMYQIQYNSSADDILVYRMIPADSHSFLLSDLASGRTYDLCVLAVYEDGATGLTATRPVGCARFSTEPALRPCGAPHAPFLGGTMIIALGGVIVASVLVFIFVLLMRYKVHGGQPPGKAKAPAPVSSVCLQTNGSLGPTPAPPAPEPAAPRAHTVVQLDCEPWRPSHEPTGP.

The N-terminal stretch at 1-16 is a signal peptide; that stretch reads MAVLPLLLCLLPLAPA. At 17-540 the chain is on the extracellular side; it reads SSPSQPATPS…APHAPFLGGT (524 aa). In terms of domain architecture, LRRNT spans 19–59; the sequence is PSQPATPSPCPRRCRCQTQSLPLSVLCPGAGLLFVPPSLDR. LRR repeat units lie at residues 84 to 105, 108 to 129, 132 to 153, 157 to 178, 181 to 202, and 205 to 226; these read GLLHLSLSRNTIRHVAAGAFAD, ALRALHLDGNRLTSLGEGQLRG, NLRHLILSNNQLAALAAGALDD, TLEDLDLSYNNLEQLPWEALGR, NVNTLGLDHNLLASVPAGAFSR, and KLARLDMTSNRLTTIPPDPLFS. One can recognise an LRRCT domain in the interval 249–295; that stretch reads NPLHCNCELVWLRRLAREDDLEACASPPALGGRYFWAVGEEEFVCEP. Positions 295-382 constitute an Ig-like domain; it reads PPVVTHRSPP…GEATAAVELT (88 aa). A disulfide bridge connects residues Cys317 and Cys366. 2 N-linked (GlcNAc...) asparagine glycosylation sites follow: Asn348 and Asn393. The disordered stretch occupies residues 380–432; it reads ELTVGPPPPPQLANSTSCDPPRDGDPDALTPPSAASASAAAKAADTGPPTDRG. Positions 406-429 are enriched in low complexity; sequence DALTPPSAASASAAAKAADTGPPT. The region spanning 427–525 is the Fibronectin type-III domain; sequence PPTDRGVQVT…GCARFSTEPA (99 aa). The chain crosses the membrane as a helical span at residues 541 to 561; sequence MIIALGGVIVASVLVFIFVLL. The Cytoplasmic portion of the chain corresponds to 562–628; it reads MRYKVHGGQP…WRPSHEPTGP (67 aa). The interval 587-628 is disordered; sequence QTNGSLGPTPAPPAPEPAAPRAHTVVQLDCEPWRPSHEPTGP. Positions 595–604 are enriched in pro residues; it reads TPAPPAPEPA. The span at 617–628 shows a compositional bias: basic and acidic residues; sequence EPWRPSHEPTGP.

This sequence belongs to the LRFN family. Can form heteromeric complexes with LRFN1, LRFN2, LRFN4 and LRFN5. Able to form homomeric complexes across cell junctions, between adjacent cells. Does not interact with DLG4. Post-translationally, N-glycosylated.

The protein localises to the cell membrane. It is found in the cell projection. It localises to the axon. The protein resides in the dendrite. Its subcellular location is the synapse. The protein localises to the presynaptic cell membrane. It is found in the postsynaptic cell membrane. Its function is as follows. Cell adhesion molecule that mediates homophilic cell-cell adhesion in a Ca(2+)-independent manner. Promotes neurite outgrowth in hippocampal neurons. The polypeptide is Leucine-rich repeat and fibronectin type-III domain-containing protein 3 (LRFN3) (Ailuropoda melanoleuca (Giant panda)).